The sequence spans 129 residues: Small ribosomal subunit protein uS11 (129 aa).

It belongs to the universal ribosomal protein uS11 family. As to quaternary structure, part of the 30S ribosomal subunit. Interacts with proteins S7 and S18. Binds to IF-3.

Its function is as follows. Located on the platform of the 30S subunit, it bridges several disparate RNA helices of the 16S rRNA. Forms part of the Shine-Dalgarno cleft in the 70S ribosome. The protein is Small ribosomal subunit protein uS11 of Sinorhizobium medicae (strain WSM419) (Ensifer medicae).